The sequence spans 299 residues: Putative beta-glucosidase 2 (299 aa).

An N-terminal signal peptide occupies residues 1 to 16; sequence MLHCITTIFLSISRMT. 49-50 contacts a beta-D-glucoside; sequence NE. Residue Glu-50 is the Proton donor of the active site. The cysteines at positions 69 and 72 are disulfide-linked. Asn-71 and Asn-76 each carry an N-linked (GlcNAc...) asparagine glycan. Tyr-189 provides a ligand contact to a beta-D-glucoside. Residue Asn-222 is glycosylated (N-linked (GlcNAc...) asparagine). An a beta-D-glucoside-binding site is contributed by Glu-255. The active-site Nucleophile is the Glu-255. Asn-290 is a glycosylation site (N-linked (GlcNAc...) asparagine).

Belongs to the glycosyl hydrolase 1 family.

It carries out the reaction Hydrolysis of terminal, non-reducing beta-D-glucosyl residues with release of beta-D-glucose.. This Arabidopsis thaliana (Mouse-ear cress) protein is Putative beta-glucosidase 2.